The primary structure comprises 375 residues: Eukaryotic translation initiation factor 3 subunit F (375 aa).

The MPN domain occupies 30-166 (VVIQPQALFS…TRAYISAPVG (137 aa)). A disordered region spans residues 307 to 375 (LGGESGSGES…EAQNGKEEKK (69 aa)). The segment covering 323–332 (QRGGKGGRGG) has biased composition (gly residues). Basic and acidic residues-rich tracts occupy residues 336 to 345 (TQERSGEEAR) and 358 to 375 (RSYEERTNEAQNGKEEKK).

Belongs to the eIF-3 subunit F family. Component of the eukaryotic translation initiation factor 3 (eIF-3) complex.

The protein resides in the cytoplasm. In terms of biological role, component of the eukaryotic translation initiation factor 3 (eIF-3) complex, which is involved in protein synthesis of a specialized repertoire of mRNAs and, together with other initiation factors, stimulates binding of mRNA and methionyl-tRNAi to the 40S ribosome. The eIF-3 complex specifically targets and initiates translation of a subset of mRNAs involved in cell proliferation. This is Eukaryotic translation initiation factor 3 subunit F from Aspergillus niger (strain ATCC MYA-4892 / CBS 513.88 / FGSC A1513).